A 415-amino-acid polypeptide reads, in one-letter code: Serine hydroxymethyltransferase (415 aa).

Residues L117 and 121-123 each bind (6S)-5,6,7,8-tetrahydrofolate; that span reads GHL. K226 is subject to N6-(pyridoxal phosphate)lysine. (6S)-5,6,7,8-tetrahydrofolate is bound at residue E241.

The protein belongs to the SHMT family. As to quaternary structure, homodimer. Pyridoxal 5'-phosphate is required as a cofactor.

Its subcellular location is the cytoplasm. The enzyme catalyses (6R)-5,10-methylene-5,6,7,8-tetrahydrofolate + glycine + H2O = (6S)-5,6,7,8-tetrahydrofolate + L-serine. The protein operates within one-carbon metabolism; tetrahydrofolate interconversion. It participates in amino-acid biosynthesis; glycine biosynthesis; glycine from L-serine: step 1/1. Its function is as follows. Catalyzes the reversible interconversion of serine and glycine with tetrahydrofolate (THF) serving as the one-carbon carrier. This reaction serves as the major source of one-carbon groups required for the biosynthesis of purines, thymidylate, methionine, and other important biomolecules. Also exhibits THF-independent aldolase activity toward beta-hydroxyamino acids, producing glycine and aldehydes, via a retro-aldol mechanism. This Bacillus pumilus (strain SAFR-032) protein is Serine hydroxymethyltransferase.